The chain runs to 272 residues: Undecaprenyl-diphosphatase (272 aa).

The next 7 membrane-spanning stretches (helical) occupy residues Phe2 to Ile22, Phe43 to Tyr63, Trp82 to Leu102, Leu110 to Leu130, Tyr185 to Ile205, Val224 to Leu244, and Phe252 to Ile272.

This sequence belongs to the UppP family.

The protein localises to the cell membrane. It carries out the reaction di-trans,octa-cis-undecaprenyl diphosphate + H2O = di-trans,octa-cis-undecaprenyl phosphate + phosphate + H(+). Its function is as follows. Catalyzes the dephosphorylation of undecaprenyl diphosphate (UPP). Confers resistance to bacitracin. The sequence is that of Undecaprenyl-diphosphatase from Lacticaseibacillus casei (strain BL23) (Lactobacillus casei).